The following is a 594-amino-acid chain: UvrABC system protein C (594 aa).

Residues 14–91 (DSPGCYLHKD…IQENMPKYNI (78 aa)) enclose the GIY-YIG domain. One can recognise a UVR domain in the interval 196-231 (DKIIDDLRSKMLEASNKQEFERAAEYRDLISGIATM).

The protein belongs to the UvrC family. As to quaternary structure, interacts with UvrB in an incision complex.

It is found in the cytoplasm. Functionally, the UvrABC repair system catalyzes the recognition and processing of DNA lesions. UvrC both incises the 5' and 3' sides of the lesion. The N-terminal half is responsible for the 3' incision and the C-terminal half is responsible for the 5' incision. This is UvrABC system protein C from Streptococcus equi subsp. zooepidemicus (strain MGCS10565).